The following is a 490-amino-acid chain: Glutamyl-tRNA(Gln) amidotransferase subunit A (490 aa).

Catalysis depends on charge relay system residues Lys78 and Ser153. The Acyl-ester intermediate role is filled by Ser177.

It belongs to the amidase family. GatA subfamily. Heterotrimer of A, B and C subunits.

It catalyses the reaction L-glutamyl-tRNA(Gln) + L-glutamine + ATP + H2O = L-glutaminyl-tRNA(Gln) + L-glutamate + ADP + phosphate + H(+). Allows the formation of correctly charged Gln-tRNA(Gln) through the transamidation of misacylated Glu-tRNA(Gln) in organisms which lack glutaminyl-tRNA synthetase. The reaction takes place in the presence of glutamine and ATP through an activated gamma-phospho-Glu-tRNA(Gln). The chain is Glutamyl-tRNA(Gln) amidotransferase subunit A from Desulforapulum autotrophicum (strain ATCC 43914 / DSM 3382 / VKM B-1955 / HRM2) (Desulfobacterium autotrophicum).